The sequence spans 232 residues: Ribosomal RNA small subunit methyltransferase G (232 aa).

S-adenosyl-L-methionine-binding positions include glycine 93, leucine 98, 144 to 145, and arginine 163; that span reads VE.

It belongs to the methyltransferase superfamily. RNA methyltransferase RsmG family.

It localises to the cytoplasm. It catalyses the reaction guanosine(527) in 16S rRNA + S-adenosyl-L-methionine = N(7)-methylguanosine(527) in 16S rRNA + S-adenosyl-L-homocysteine. Specifically methylates the N7 position of guanine in position 527 of 16S rRNA. The protein is Ribosomal RNA small subunit methyltransferase G of Burkholderia pseudomallei (strain 1106a).